A 159-amino-acid polypeptide reads, in one-letter code: Ribosomal RNA large subunit methyltransferase H (159 aa).

S-adenosyl-L-methionine contacts are provided by residues Leu-76, Gly-108, and 127-132 (FGLLTL).

Belongs to the RNA methyltransferase RlmH family. As to quaternary structure, homodimer.

The protein resides in the cytoplasm. It catalyses the reaction pseudouridine(1915) in 23S rRNA + S-adenosyl-L-methionine = N(3)-methylpseudouridine(1915) in 23S rRNA + S-adenosyl-L-homocysteine + H(+). Functionally, specifically methylates the pseudouridine at position 1915 (m3Psi1915) in 23S rRNA. The protein is Ribosomal RNA large subunit methyltransferase H of Streptococcus equi subsp. zooepidemicus (strain H70).